Here is a 184-residue protein sequence, read N- to C-terminus: GTP-binding protein Rheb (184 aa).

Lys-8 participates in a covalent cross-link: Glycyl lysine isopeptide (Lys-Gly) (interchain with G-Cter in ubiquitin). Residues Ser-16, Val-17, Gly-18, Lys-19, Ser-20, Ser-21, Val-32, and Asp-33 each coordinate GDP. Ser-16, Val-17, Gly-18, Lys-19, Ser-20, Ser-21, Val-32, Asp-33, Tyr-35, Pro-37, Thr-38, Gly-63, Asn-119, Lys-120, and Asp-122 together coordinate GTP. Residue Ser-20 participates in Mg(2+) binding. An Effector region motif is present at residues 35-43 (YDPTIENTF). Thr-38 contributes to the Mg(2+) binding site. Residue Asn-119 coordinates GDP. Asp-122 is a GDP binding site. Ser-130 is subject to Phosphoserine; by MAPKAPK5. GDP is bound at residue Ala-150. Ala-150 is a GTP binding site. Cys-181 bears the Cysteine methyl ester mark. Cys-181 carries S-farnesyl cysteine lipidation. Residues 182 to 184 (SVM) constitute a propeptide, removed in mature form.

Belongs to the small GTPase superfamily. Rheb family. In terms of assembly, associates with the mTORC1 complex (MTOR, MLST8 and RPTOR) in a guanyl nucleotide-independent manner. Interacts with TSC2. Interacts with MCRS1; the interaction maintains RHEB at the lysosome in its active GTP-bound form and prevents its interaction with the mTORC1 complex inhibitor TSC2, ensuring activation of the mTORC1 complex by RHEB. Interacts (when prenylated) with PDE6D; this promotes release from membranes. Post-translationally, farnesylation is important for efficiently activating mTORC1-mediated signaling. In terms of processing, polyubiquitinated in response to amino acid, promoting its interaction with MTOR and mTORC1 activation. Deubiquitination by ATXN3 promotes recruitment of the TSC-TBC complex and RHEB inactivation by TSC2. Monoubiquitinated at Lys-8 by RNF152, promoting its association with the TSC-TBC complex. Deubiquitinated at Lys-8 by USP4, promoting mTORC1 activation. Phosphorylation by MAPKAPK5 impairs GTP-binding and inactivation.

It is found in the endomembrane system. Its subcellular location is the lysosome membrane. It localises to the golgi apparatus membrane. The protein localises to the endoplasmic reticulum membrane. The protein resides in the cytoplasm. It is found in the cytosol. The enzyme catalyses GTP + H2O = GDP + phosphate + H(+). With respect to regulation, alternates between an inactive form bound to GDP and an active form bound to GTP. Inactivated by the TSC-TBC complex via the GTPase activating protein (GAP) domain of TSC2. Autoinhibited by Tyr-35, which constrains the active site conformation, restricting the access of the catalytic Asp-65 to the nucleotide-binding pocket. Functionally, small GTPase that acts as an allosteric activator of the canonical mTORC1 complex, an evolutionarily conserved central nutrient sensor that stimulates anabolic reactions and macromolecule biosynthesis to promote cellular biomass generation and growth. In response to nutrients, growth factors or amino acids, specifically activates the protein kinase activity of MTOR, the catalytic component of the mTORC1 complex: acts by causing a conformational change that allows the alignment of residues in the active site of MTOR, thereby enhancing the phosphorylation of ribosomal protein S6 kinase (RPS6KB1 and RPS6KB2) and EIF4EBP1 (4E-BP1). RHEB is also required for localization of the TSC-TBC complex to lysosomal membranes. In response to starvation, RHEB is inactivated by the TSC-TBC complex, preventing activation of mTORC1. Has low intrinsic GTPase activity. The protein is GTP-binding protein Rheb of Mus musculus (Mouse).